Reading from the N-terminus, the 504-residue chain is Ammonium transporter 1 member 4 (504 aa).

Helical transmembrane passes span 12–32, 55–75, 90–110, 136–156, 161–181, 207–227, 251–271, 292–314, 318–338, 344–364, 377–397, and 430–450; these read LIPL…AEYI, LLFS…LCAG, VIDA…FAFG, YFLY…GSIA, FVAY…IVSH, FAGS…GALI, LVVL…PGSF, AVGR…TLFG, IDGY…FAAI, VVEP…LMGC, LEAA…TGLF, and VVQI…LFFI. Position 471 is a phosphothreonine (threonine 471).

The protein belongs to the ammonia transporter channel (TC 1.A.11.2) family. As to expression, specifically expressed in pollen grains and tubes.

It localises to the cell membrane. High affinity ammonium transporter in the plasma membrane. This chain is Ammonium transporter 1 member 4 (AMT1-4), found in Arabidopsis thaliana (Mouse-ear cress).